We begin with the raw amino-acid sequence, 618 residues long: Elongation factor 4 (618 aa).

Residues 17–198 form the tr-type G domain; it reads AIIRNFCIIA…KIVRDLPAPE (182 aa). Residues 29 to 34 and 145 to 148 contribute to the GTP site; these read DHGKST and NKID.

It belongs to the TRAFAC class translation factor GTPase superfamily. Classic translation factor GTPase family. LepA subfamily.

It is found in the cell membrane. The catalysed reaction is GTP + H2O = GDP + phosphate + H(+). Functionally, required for accurate and efficient protein synthesis under certain stress conditions. May act as a fidelity factor of the translation reaction, by catalyzing a one-codon backward translocation of tRNAs on improperly translocated ribosomes. Back-translocation proceeds from a post-translocation (POST) complex to a pre-translocation (PRE) complex, thus giving elongation factor G a second chance to translocate the tRNAs correctly. Binds to ribosomes in a GTP-dependent manner. The chain is Elongation factor 4 from Pseudarthrobacter chlorophenolicus (strain ATCC 700700 / DSM 12829 / CIP 107037 / JCM 12360 / KCTC 9906 / NCIMB 13794 / A6) (Arthrobacter chlorophenolicus).